A 211-amino-acid polypeptide reads, in one-letter code: Synaptosomal-associated protein 23 (211 aa).

Met1 is modified (N-acetylmethionine). Phosphoserine is present on residues Ser5, Ser6, Ser20, Ser23, and Ser34. The t-SNARE coiled-coil homology 1 domain occupies 14–76 (HQITDESLES…RETEKTLTEL (63 aa)). Positions 23 to 76 (STRRILGLAIESQDAGIKTITMLDEQKEQLNRIEEGLDQINKDMRETEKTLTEL) form a coiled coil. 5 S-palmitoyl cysteine lipidation sites follow: Cys79, Cys80, Cys83, Cys85, and Cys87. The residue at position 110 (Ser110) is a Phosphoserine. Residue Cys112 is the site of S-palmitoyl cysteine attachment. The 63-residue stretch at 146 to 208 (DAREDEMEEN…DIANARAKKL (63 aa)) folds into the t-SNARE coiled-coil homology 2 domain. Ser161 is subject to Phosphoserine.

This sequence belongs to the SNAP-25 family. Homotetramer (via coiled-coil domain), also forms heterotetramers with STX4 and VAMP3. Found in a complex with VAMP8 and STX1A. Found in a complex with VAMP8 and STX4 in pancreas. Interacts simultaneously with SNAPIN and SYN4. Interacts with STX1A. Interacts with STX12. Interacts tightly to multiple syntaxins and synaptobrevins/VAMPs. Interacts with ZDHHC13 (via ANK repeats). Interacts with ZDHHC17 (via ANK repeats). In terms of tissue distribution, ubiquitous. Highest levels where found in placenta.

It is found in the cell membrane. The protein localises to the synapse. Its subcellular location is the synaptosome. Essential component of the high affinity receptor for the general membrane fusion machinery and an important regulator of transport vesicle docking and fusion. This chain is Synaptosomal-associated protein 23 (SNAP23), found in Homo sapiens (Human).